Reading from the N-terminus, the 463-residue chain is Glycerol-3-phosphate acyltransferase, chloroplastic (463 aa).

Residues 1-91 constitute a chloroplast transit peptide; that stretch reads MSIFFSPSSP…AATQPSAGSD (91 aa). 2 disordered regions span residues 18 to 37 and 65 to 95; these read NANP…TPPL and AETV…HGHS. Composition is skewed to low complexity over residues 24 to 37 and 74 to 90; these read SPSS…TPPL and PSPS…SAGS. Positions 229-234 match the HXXXXD motif motif; the sequence is HQTEAD.

The protein belongs to the GPAT/DAPAT family.

The protein localises to the plastid. The protein resides in the chloroplast stroma. The catalysed reaction is sn-glycerol 3-phosphate + an acyl-CoA = a 1-acyl-sn-glycero-3-phosphate + CoA. It functions in the pathway phospholipid metabolism; CDP-diacylglycerol biosynthesis; CDP-diacylglycerol from sn-glycerol 3-phosphate: step 1/3. Esterifies acyl-group from acyl-ACP to the sn-1 position of glycerol-3-phosphate. The enzyme from chilling-resistant plants discriminates against non-fluid palmitic acid and selects oleic acid whereas the enzyme from sensitive plants accepts both fatty acids. The protein is Glycerol-3-phosphate acyltransferase, chloroplastic of Carthamus tinctorius (Safflower).